A 373-amino-acid polypeptide reads, in one-letter code: Flagellar P-ring protein (373 aa).

The first 26 residues, 1–26, serve as a signal peptide directing secretion; sequence MKLFFRIVTLVAVVAMSLADMAPAWA.

This sequence belongs to the FlgI family. As to quaternary structure, the basal body constitutes a major portion of the flagellar organelle and consists of four rings (L,P,S, and M) mounted on a central rod.

The protein localises to the periplasm. The protein resides in the bacterial flagellum basal body. Functionally, assembles around the rod to form the L-ring and probably protects the motor/basal body from shearing forces during rotation. In Rhizobium etli (strain ATCC 51251 / DSM 11541 / JCM 21823 / NBRC 15573 / CFN 42), this protein is Flagellar P-ring protein.